Consider the following 126-residue polypeptide: MNELPPQIQNQLAQIQQVQQQAQALMQQKAQVEMLLRETERAFEELQKTEEGAEVYKGAGELLIKAKREDVLKDLEEKKDNFDVRLKSLSRQEERLQSRFNQLQEQLKSALGKMQGQGPATGGRAE.

This sequence belongs to the prefoldin subunit beta family. Heterohexamer of two alpha and four beta subunits.

Its subcellular location is the cytoplasm. Molecular chaperone capable of stabilizing a range of proteins. Seems to fulfill an ATP-independent, HSP70-like function in archaeal de novo protein folding. The chain is Prefoldin subunit beta from Methanocella arvoryzae (strain DSM 22066 / NBRC 105507 / MRE50).